We begin with the raw amino-acid sequence, 539 residues long: GMP synthase [glutamine-hydrolyzing] (539 aa).

Positions 4 to 202 constitute a Glutamine amidotransferase type-1 domain; the sequence is KILILDFGSQ…VLQIAGCKPD (199 aa). The Nucleophile role is filled by Cys-81. Catalysis depends on residues His-176 and Glu-178. In terms of domain architecture, GMPS ATP-PPase spans 203–395; sequence WVMRDHIEEA…LGLPPEMVYR (193 aa). 230-236 serves as a coordination point for ATP; it reads SGGVDSS.

Homodimer.

It carries out the reaction XMP + L-glutamine + ATP + H2O = GMP + L-glutamate + AMP + diphosphate + 2 H(+). The protein operates within purine metabolism; GMP biosynthesis; GMP from XMP (L-Gln route): step 1/1. Its function is as follows. Catalyzes the synthesis of GMP from XMP. In Cupriavidus taiwanensis (strain DSM 17343 / BCRC 17206 / CCUG 44338 / CIP 107171 / LMG 19424 / R1) (Ralstonia taiwanensis (strain LMG 19424)), this protein is GMP synthase [glutamine-hydrolyzing].